Consider the following 349-residue polypeptide: MPKLEQFEIKKYWQIFSGLKPIENKVNHDQVLPILYNSKLDSSVLNKIWFLADIDDDDNLDFEEFVICMRLIFDMVNKNISSVPDELPDWLIPGSKVNLIKERKKRKQIENADLPPKKEIKVDWYMSPDDLNQYEKIYNSCAKLTDGTITFNELSTKLSTKFFNISKTDLNKVWSLINPQNLPSIDRDPTFYFIHCLRQRNDLGAEIPASLPNSLAEVCNKKQLSYDLRSSQPPTKRKEEANEVDNLRDNGQNSSSDSSGSNVLSNEDSIKQKYASLTDDQVANMREQLEGLLNYKKSEKTQGGSKLSKRINIRSITDDLDNIEQQVEVLENYLNNKRHELQALQAEIN.

2 EH domains span residues 8-98 (EIKK…SKVN) and 130-222 (DLNQ…CNKK). An EF-hand 1 domain is found at 40–75 (LDSSVLNKIWFLADIDDDDNLDFEEFVICMRLIFDM). Residues Asp-53, Asp-55, Asp-57, Asn-59, and Glu-64 each coordinate Ca(2+). Positions 96 to 105 (KVNLIKERKK) are polyphosphoinositide (PIP2)-binding. The 19-residue stretch at 146-164 (DGTITFNELSTKLSTKFFN) folds into the EF-hand 2 domain. The disordered stretch occupies residues 226–265 (YDLRSSQPPTKRKEEANEVDNLRDNGQNSSSDSSGSNVLS). The segment covering 236–248 (KRKEEANEVDNLR) has biased composition (basic and acidic residues). Residues 249–265 (DNGQNSSSDSSGSNVLS) are compositionally biased toward low complexity. Ser-276 is subject to Phosphoserine. 2 tandem repeats follow at residues 276–295 (SLTD…LLNY) and 315–334 (SITD…ENYL). The tract at residues 276–334 (SLTDDQVANMREQLEGLLNYKKSEKTQGGSKLSKRINIRSITDDLDNIEQQVEVLENYL) is 2 X 20 AA approximate repeats. A coiled-coil region spans residues 307 to 349 (LSKRINIRSITDDLDNIEQQVEVLENYLNNKRHELQALQAEIN).

It belongs to the END3 family. As to quaternary structure, component of the PAN1 actin cytoskeleton-regulatory complex composed of at least END3, PAN1, and SLA1. Interacts with SCD5, SLA2 and YAP1802. Interacts directly with PAN1; the interaction with PAN1 is prevented by PAN1 phosphorylation by PKR1.

The protein localises to the cell membrane. It localises to the endosome membrane. It is found in the cytoplasm. The protein resides in the cytoskeleton. Its subcellular location is the actin patch. In terms of biological role, component of the PAN1 actin cytoskeleton-regulatory complex required for the internalization of endosomes during actin-coupled endocytosis. The complex links the site of endocytosis to the cell membrane-associated actin cytoskeleton. Mediates uptake of external molecules and vacuolar degradation of plasma membrane proteins. Plays a role in the proper organization of the cell membrane-associated actin cytoskeleton and promotes its destabilization. END3 regulates PAN1 function by preventing phosphorylation of PAN1 by PKR1 and is also involved in the correct localization of SLA1 to the cell cortex, in the bipolar budding of diploid cells and the correct distribution of chitin at the cell surface. The chain is Actin cytoskeleton-regulatory complex protein END3 (END3) from Saccharomyces cerevisiae (strain ATCC 204508 / S288c) (Baker's yeast).